The chain runs to 309 residues: MDLTTWAIFPLLLGSIGVYSLYKLLQRLRSGAYLQDAVVVITGATSGLGRECAKVFYAAGTRLVLCGRSEEGLKNLVQELSQMRIKSAQLHKPHMVIFDLSDVEAVNSAANEILHLTGRVDILINNAGISYRGTILDTKVSVDRMVMDTNYFGPVALTKALIPSMIKNRRGHIVVISSVQGKISIPFRSAYSASKHATQAFFDCLRAEMSPYEIDVTVVNPGYIKTNLSLNAVTGDGSNYGVMDNNTAEGRTPEEVAQTVLRAVGERRKELLVAGLVPTLAVYLRTLAPTIFFSFMAARAKKERKLKDS.

Residues 1 to 4 are Cytoplasmic-facing; that stretch reads MDLT. A helical; Signal-anchor for type II membrane protein membrane pass occupies residues 5–25; sequence TWAIFPLLLGSIGVYSLYKLL. Residues 26-272 are Lumenal-facing; sequence QRLRSGAYLQ…AVGERRKELL (247 aa). NAD(+)-binding residues include Ser46 and Leu48. Ser178 contributes to the substrate binding site. Tyr191, Lys195, and Thr226 together coordinate NAD(+). Catalysis depends on Tyr191, which acts as the Proton acceptor.

It belongs to the short-chain dehydrogenases/reductases (SDR) family.

It localises to the endoplasmic reticulum membrane. Its function is as follows. Putative oxidoreductase. This Xenopus tropicalis (Western clawed frog) protein is Dehydrogenase/reductase SDR family member 7B (dhrs7b).